The sequence spans 268 residues: Tropinone reductase homolog At2g29170 (268 aa).

Residue 22 to 46 (LVTGGSKGLGEAVVEELAMLGARVH) participates in NADP(+) binding. S155 is a substrate binding site. The active-site Proton acceptor is the Y168.

This sequence belongs to the short-chain dehydrogenases/reductases (SDR) family. SDR65C subfamily.

In Arabidopsis thaliana (Mouse-ear cress), this protein is Tropinone reductase homolog At2g29170.